We begin with the raw amino-acid sequence, 180 residues long: ATP synthase subunit delta (180 aa).

It belongs to the ATPase delta chain family. F-type ATPases have 2 components, F(1) - the catalytic core - and F(0) - the membrane proton channel. F(1) has five subunits: alpha(3), beta(3), gamma(1), delta(1), epsilon(1). F(0) has three main subunits: a(1), b(2) and c(10-14). The alpha and beta chains form an alternating ring which encloses part of the gamma chain. F(1) is attached to F(0) by a central stalk formed by the gamma and epsilon chains, while a peripheral stalk is formed by the delta and b chains.

The protein resides in the cell membrane. Its function is as follows. F(1)F(0) ATP synthase produces ATP from ADP in the presence of a proton or sodium gradient. F-type ATPases consist of two structural domains, F(1) containing the extramembraneous catalytic core and F(0) containing the membrane proton channel, linked together by a central stalk and a peripheral stalk. During catalysis, ATP synthesis in the catalytic domain of F(1) is coupled via a rotary mechanism of the central stalk subunits to proton translocation. Functionally, this protein is part of the stalk that links CF(0) to CF(1). It either transmits conformational changes from CF(0) to CF(1) or is implicated in proton conduction. The chain is ATP synthase subunit delta from Bacillus cytotoxicus (strain DSM 22905 / CIP 110041 / 391-98 / NVH 391-98).